The chain runs to 558 residues: Atlastin-1 (558 aa).

A disordered region spans residues 1 to 27 (MAKNRRDRNSWGGFSEKTYEWSSEEEE). Residues 1 to 34 (MAKNRRDRNSWGGFSEKTYEWSSEEEEPVKKAGP) are N-terminal hypervariable region (HVR). Residues 1-449 (MAKNRRDRNS…NIFHAARTPA (449 aa)) lie on the Cytoplasmic side of the membrane. Phosphoserine is present on residues serine 10, serine 22, and serine 23. Residues 64 to 309 (DKEVVAVSVA…LIPWLLSPES (246 aa)) enclose the GB1/RHD3-type G domain. The GDP site is built by arginine 77, lysine 78, glycine 79, lysine 80, serine 81, phenylalanine 82, glutamine 148, arginine 217, aspartate 218, valine 276, and asparagine 279. Residues arginine 77, lysine 78, glycine 79, lysine 80, serine 81, and phenylalanine 82 each contribute to the GTP site. Serine 81 provides a ligand contact to Mg(2+). Positions 217, 218, and 276 each coordinate GTP. The tract at residues 347–438 (MLQATAEANN…YIQYIKHNDS (92 aa)) is 3HB (three-helix bundle) domain. N6-acetyllysine is present on lysine 395. Positions 412 to 439 (EFSRRYLQQLESEIDELYIQYIKHNDSK) form a coiled coil. A linker region spans residues 439–447 (KNIFHAART). Residues 450–470 (TLFVVIFITYVIAGVTGFIGL) form a helical membrane-spanning segment. Residue aspartate 471 is a topological domain, lumenal. The chain crosses the membrane as a helical span at residues 472 to 492 (IIASLCNMIMGLTLITLCTWA). At 493–558 (YIRYSGEYRE…STEQSEKKKM (66 aa)) the chain is on the cytoplasmic side. Residues 521-558 (NEALYKLYSAAATHRHLYHQAFPTPKSESTEQSEKKKM) are autoinhibitory domain.

Belongs to the TRAFAC class dynamin-like GTPase superfamily. GB1/RHD3 GTPase family. GB1 subfamily. In terms of assembly, monomeric and homodimeric. The homodimer, transiently formed by two molecules on opposing membranes, is the active form mediating ER membrane fusion. Interacts with REEP1, REEP5, RTN3 and RTN4 (via the transmembrane region); these proteins are involved in endoplasmic reticulum tubular network organization. Interacts with ZFYVE27; both proteins are involved in endoplasmic reticulum tubular network organization. Interacts with ARL6IP1; both proteins are involved in endoplasmic reticulum tubular network organization. Interacts with SPAST; the interaction is direct, could recruit SPAST to Golgi membranes. Interacts (via N-terminal region) with MAP4K4 (via CNH regulatory domain). May interact with TMED2. Interacts with CPT1C. In terms of processing, phosphorylated. Phosphorylation, by different kinases, of the N-terminal hypervariable region (HVR) regulates the ATL1-mediated membrane tethering step.

The protein resides in the endoplasmic reticulum membrane. It is found in the golgi apparatus membrane. The protein localises to the cell projection. It localises to the axon. It catalyses the reaction GTP + H2O = GDP + phosphate + H(+). Functionally, atlastin-1 (ATL1) is a membrane-anchored GTPase that mediates the GTP-dependent fusion of endoplasmic reticulum (ER) membranes, maintaining the continuous ER network. It facilitates the formation of three-way junctions where ER tubules intersect. Two atlastin-1 on neighboring ER tubules bind GTP and form loose homodimers through the GB1/RHD3-type G domains and 3HB regions. Upon GTP hydrolysis, the 3HB regions tighten, pulling the membranes together to drive their fusion. After fusion, the homodimer disassembles upon release of inorganic phosphate (Pi). Subsequently, GDP dissociates, resetting the monomers to a conformation ready for a new fusion cycle. May also regulate more or less directly Golgi biogenesis. Indirectly regulates axonal development. This chain is Atlastin-1, found in Pongo abelii (Sumatran orangutan).